A 381-amino-acid chain; its full sequence is RING-H2 finger protein ATL1 (381 aa).

The segment at 1 to 31 (MDLTDRRNPFNNLVFPPPPPPPSTTFTSPIF) is disordered. Residues 46–66 (IAVIGILATAFLLVSYYIFVI) form a helical membrane-spanning segment. The RING-type; atypical zinc-finger motif lies at 134–176 (CSVCLNEFQEDEKLRIIPNCCHVFHIDCIDIWLQGNANCPLCR). Disordered stretches follow at residues 249–269 (TSNE…PIKF) and 334–354 (RQIP…GNSR). Residues 250–261 (SNEVSTGNSPKS) show a composition bias toward polar residues.

Belongs to the RING-type zinc finger family. ATL subfamily.

It is found in the membrane. It catalyses the reaction S-ubiquitinyl-[E2 ubiquitin-conjugating enzyme]-L-cysteine + [acceptor protein]-L-lysine = [E2 ubiquitin-conjugating enzyme]-L-cysteine + N(6)-ubiquitinyl-[acceptor protein]-L-lysine.. The protein operates within protein modification; protein ubiquitination. The protein is RING-H2 finger protein ATL1 (ATL1) of Arabidopsis thaliana (Mouse-ear cress).